Reading from the N-terminus, the 238-residue chain is Probable transcriptional regulatory protein YeeN (238 aa).

The protein belongs to the TACO1 family. YeeN subfamily.

The protein localises to the cytoplasm. The chain is Probable transcriptional regulatory protein YeeN from Escherichia coli O157:H7.